The following is a 468-amino-acid chain: Alcohol dehydrogenase (quinone), cytochrome c subunit (468 aa).

Residues 1 to 23 (MINRLKVTFSAAAFSLLAGTALA) form the signal peptide. Cytochrome c domains follow at residues 31-134 (ALVQ…MHGV), 178-293 (PEIA…KSLP), and 317-407 (TASV…RTSW). Residues cysteine 45, cysteine 48, histidine 49, cysteine 193, cysteine 196, histidine 197, cysteine 330, cysteine 333, and histidine 334 each contribute to the heme c site.

In terms of assembly, the alcohol dehydrogenase multicomponent enzyme system is composed of a dehydrogenase subunit I (AdhA) and a cytochrome c subunit II (AdhB). The cofactor is heme c.

It localises to the cell membrane. It catalyses the reaction ethanol + a ubiquinone = a ubiquinol + acetaldehyde. Functionally, cytochrome c component of the alcohol dehydrogenase multicomponent enzyme system which is involved in the production of acetic acid and in the ethanol oxidase respiratory chain. Quinohemoprotein alcohol dehydrogenase (ADH) catalyzes the oxidation of ethanol to acetaldehyde by transferring electrons to the ubiquinone embedded in the membrane phospholipids. The electrons transfer from ethanol to membranous ubiquinone occurs from pyrroloquinoline quinone (PQQ) to one heme c in subunit I (AdhA), and finally to two heme c in subunit II (AdhB). Besides ubiquinone reduction, ADH also has a ubiquinol (QH2) oxidation reaction which mediates electron transfer from ubiquinol to the non-energy generating bypass oxidase system. The electrons transfer occurs from ubiquinol (QH2) to the additional heme c within subunit II (AdhB). The protein is Alcohol dehydrogenase (quinone), cytochrome c subunit of Gluconacetobacter polyoxogenes (Acetobacter polyoxogenes).